Consider the following 369-residue polypeptide: Phenylalanine--tRNA ligase alpha subunit (369 aa).

E270 serves as a coordination point for Mg(2+).

The protein belongs to the class-II aminoacyl-tRNA synthetase family. Phe-tRNA synthetase alpha subunit type 1 subfamily. In terms of assembly, tetramer of two alpha and two beta subunits. Mg(2+) serves as cofactor.

It localises to the cytoplasm. The catalysed reaction is tRNA(Phe) + L-phenylalanine + ATP = L-phenylalanyl-tRNA(Phe) + AMP + diphosphate + H(+). The polypeptide is Phenylalanine--tRNA ligase alpha subunit (Phenylobacterium zucineum (strain HLK1)).